Reading from the N-terminus, the 57-residue chain is Bowman-Birk type proteinase inhibitor B4 (57 aa).

4 disulfides stabilise this stretch: Cys-6–Cys-55, Cys-12–Cys-17, Cys-26–Cys-33, and Cys-30–Cys-47.

This sequence belongs to the Bowman-Birk serine protease inhibitor family. In terms of tissue distribution, expressed in bulb (at protein level).

Its function is as follows. Serine protease inhibitor. Inhibits trypsin (Ki = 110 nM) and very weakly inhibits chymotrypsin (Ki =1200 nM). Does not inhibit bacterial subtilisin. This is Bowman-Birk type proteinase inhibitor B4 from Hyacinthus orientalis (Common hyacinth).